The chain runs to 778 residues: Melanoma-associated antigen D1 (778 aa).

Disordered stretches follow at residues 41–60, 78–123, and 182–333; these read PTNQ…PTAN, FKVQ…KGPN, and KAWN…PAWQ. Y92 is modified (phosphotyrosine). Polar residues-rich tracts occupy residues 104–118, 185–211, 225–240, 253–263, and 300–319; these read PNTQ…QNAT, NDTT…SQAD, TAQT…NLES, NNLNVEENSSG, and LAWQ…TPPA. 19 repeat units span residues 296–301, 302–307, 308–313, 332–337, 338–343, 344–349, 350–355, 356–361, 362–367, 368–373, 374–379, 380–385, 386–391, 392–397, 398–403, 404–409, 410–415, 416–421, and 422–427. Residues 296–444 form a 22 X 6 AA tandem repeats of W-[PQ]-X-P-X-X region; sequence WQTPLAWQNP…IPPDWQNLRP (149 aa). The disordered stretch occupies residues 376–412; that stretch reads NPPGWQTPPGWQTPPGWQGPPDWQGPPDWPLPPDWPL. The span at 377 to 397 shows a compositional bias: low complexity; it reads PPGWQTPPGWQTPPGWQGPPD. Pro residues predominate over residues 398–412; sequence WQGPPDWPLPPDWPL. The 20; approximate repeat unit spans residues 428 to 432; that stretch reads WIPAD. 2 tandem repeats follow at residues 433–438 and 439–444. Over residues 440–455 the composition is skewed to low complexity; the sequence is QNLRPSPNLRPSPNSR. The tract at residues 440 to 466 is disordered; it reads QNLRPSPNLRPSPNSRASQNPGAAQPR. An MAGE domain is found at 471 to 669; it reads LQERANKLVK…RDWTAQFMEA (199 aa).

In terms of assembly, interacts with DLX5, DLX7 and MSX2 and forms homomultimers. Interacts with UNC5A. Interacts with TRIM28 and PJA1. Interacts with NGFR/p75NTR and RORA. Expressed in bone marrow stromal cells from both multiple myeloma patients and healthy donors. Seems to be ubiquitously expressed.

Its subcellular location is the cytoplasm. The protein localises to the cell membrane. The protein resides in the nucleus. Involved in the apoptotic response after nerve growth factor (NGF) binding in neuronal cells. Inhibits cell cycle progression, and facilitates NGFR-mediated apoptosis. May act as a regulator of the function of DLX family members. May enhance ubiquitin ligase activity of RING-type zinc finger-containing E3 ubiquitin-protein ligases. Proposed to act through recruitment and/or stabilization of the Ubl-conjugating enzyme (E2) at the E3:substrate complex. Plays a role in the circadian rhythm regulation. May act as RORA co-regulator, modulating the expression of core clock genes such as BMAL1 and NFIL3, induced, or NR1D1, repressed. The chain is Melanoma-associated antigen D1 (MAGED1) from Homo sapiens (Human).